Consider the following 295-residue polypeptide: Shikimate dehydrogenase (NADP(+)) (295 aa).

Shikimate is bound by residues 20–22 and threonine 68; that span reads SWS. Lysine 72 (proton acceptor) is an active-site residue. Residues asparagine 93 and aspartate 108 each coordinate shikimate. NADP(+)-binding positions include 132–136 and methionine 234; that span reads GNGGA. Position 236 (tyrosine 236) interacts with shikimate. Glycine 257 lines the NADP(+) pocket.

It belongs to the shikimate dehydrogenase family. In terms of assembly, homodimer.

The catalysed reaction is shikimate + NADP(+) = 3-dehydroshikimate + NADPH + H(+). The protein operates within metabolic intermediate biosynthesis; chorismate biosynthesis; chorismate from D-erythrose 4-phosphate and phosphoenolpyruvate: step 4/7. Functionally, involved in the biosynthesis of the chorismate, which leads to the biosynthesis of aromatic amino acids. Catalyzes the reversible NADPH linked reduction of 3-dehydroshikimate (DHSA) to yield shikimate (SA). The sequence is that of Shikimate dehydrogenase (NADP(+)) from Chlorobaculum tepidum (strain ATCC 49652 / DSM 12025 / NBRC 103806 / TLS) (Chlorobium tepidum).